A 202-amino-acid chain; its full sequence is Recoverin (202 aa).

Gly-2 carries N-myristoyl glycine lipidation. At Cys-39 the chain carries Cysteine sulfenic acid (-SOH). EF-hand domains lie at 41–59 (SGRI…FFPE), 61–96 (DPKA…TSAG), 97–132 (KTNQ…IFKM), and 147–182 (TPEK…NKEI). The Ca(2+) site is built by Asp-74, Asn-76, Asp-78, Thr-80, Glu-85, Asp-110, Asp-112, Asn-114, and Glu-121. The tract at residues 189–192 (EPRK) is interaction with GRK1.

This sequence belongs to the recoverin family. In terms of assembly, homodimer; disulfide-linked. Homodimerization is caused by prolonged intense illumination. May form a complex composed of RHO, GRK1 and RCVRN in a Ca(2+)-dependent manner; RCVRN prevents the interaction between GRK1 and RHO. Interacts (via C-terminus) with GRK1 (via N-terminus); the interaction is Ca(2+)-dependent. The N-terminal glycine is linked to one of four different types of acyl groups. The most abundant is myristoleate (14:1), but 14:0, 14:2, and 12:0 acyl residues are also present. The Ca(2+) induced exposure of the myristoyl group, known as the calcium-myristoyl switch, promotes RCVRN binding to the photoreceptor cell membranes only when intracellular Ca(2+) concentration is high. In terms of processing, oxidation on Cys-39 occurs in response to prolonged intense illumination and results in the formation of disulfide homodimers, and to a lesser extent disulfide-linked heterodimers.

It localises to the photoreceptor inner segment. It is found in the cell projection. Its subcellular location is the cilium. The protein localises to the photoreceptor outer segment. The protein resides in the photoreceptor outer segment membrane. It localises to the perikaryon. Its function is as follows. Acts as a calcium sensor and regulates phototransduction of cone and rod photoreceptor cells. Modulates light sensitivity of cone photoreceptor in dark and dim conditions. In response to high Ca(2+) levels induced by low light levels, prolongs RHO/rhodopsin activation in rod photoreceptor cells by binding to and inhibiting GRK1-mediated phosphorylation of RHO/rhodopsin. Plays a role in scotopic vision/enhances vision in dim light by enhancing signal transfer between rod photoreceptors and rod bipolar cells. Improves rod photoreceptor sensitivity in dim light and mediates response of rod photoreceptors to facilitate detection of change and motion in bright light. This Canis lupus familiaris (Dog) protein is Recoverin (RCVRN).